Consider the following 460-residue polypeptide: Inactive 7-epi-sesquithujene synthase (460 aa).

Residues Asp-308 and Asp-312 each coordinate Mg(2+). Substrate is bound by residues Asp-308 and Asp-312. A DDXXD motif motif is present at residues 308–312 (DDMFD).

The protein belongs to the terpene synthase family. Monomer. The cofactor is Mg(2+). Mn(2+) is required as a cofactor.

It is found in the cytoplasm. It functions in the pathway secondary metabolite biosynthesis; terpenoid biosynthesis. Functionally, non-functional sesquiterpene synthase due to a frameshift removing part of the catalytic site. In Zea mays (Maize), this protein is Inactive 7-epi-sesquithujene synthase.